We begin with the raw amino-acid sequence, 286 residues long: UDP-3-O-acyl-N-acetylglucosamine deacetylase (286 aa).

Residues H81, H240, and D244 each contribute to the Zn(2+) site. H266 functions as the Proton donor in the catalytic mechanism.

The protein belongs to the LpxC family. It depends on Zn(2+) as a cofactor.

The catalysed reaction is a UDP-3-O-[(3R)-3-hydroxyacyl]-N-acetyl-alpha-D-glucosamine + H2O = a UDP-3-O-[(3R)-3-hydroxyacyl]-alpha-D-glucosamine + acetate. It participates in glycolipid biosynthesis; lipid IV(A) biosynthesis; lipid IV(A) from (3R)-3-hydroxytetradecanoyl-[acyl-carrier-protein] and UDP-N-acetyl-alpha-D-glucosamine: step 2/6. In terms of biological role, catalyzes the hydrolysis of UDP-3-O-myristoyl-N-acetylglucosamine to form UDP-3-O-myristoylglucosamine and acetate, the committed step in lipid A biosynthesis. The polypeptide is UDP-3-O-acyl-N-acetylglucosamine deacetylase (Francisella tularensis subsp. tularensis (strain FSC 198)).